Here is a 142-residue protein sequence, read N- to C-terminus: Lysozyme 2 (142 aa).

Residues 1-20 (MLKLTLTILAAVLLVTPAFG) form the signal peptide. The 122-residue stretch at 21-142 (KVYTRCSLAR…HTLPSIDDCF (122 aa)) folds into the C-type lysozyme domain. 4 disulfides stabilise this stretch: Cys-26–Cys-141, Cys-47–Cys-131, Cys-82–Cys-98, and Cys-94–Cys-112. Glu-52 is a catalytic residue. Residue Asn-66 is glycosylated (N-linked (GlcNAc...) asparagine). Residue Asp-70 is part of the active site.

Belongs to the glycosyl hydrolase 22 family. As to expression, expressed only in the midgut where it is concentrated around the middle in all larval stages.

It localises to the secreted. The catalysed reaction is Hydrolysis of (1-&gt;4)-beta-linkages between N-acetylmuramic acid and N-acetyl-D-glucosamine residues in a peptidoglycan and between N-acetyl-D-glucosamine residues in chitodextrins.. In terms of biological role, lysozymes have primarily a bacteriolytic function. Shows antibacterial activity against Gram-positive bacterium M.luteus but shows no activity against Gram-negative bacterium E.coli. Likely to play a role in the eradication of ingested pathogens during their passage through the intestine. The protein is Lysozyme 2 of Lucilia sericata (Green bottle fly).